We begin with the raw amino-acid sequence, 104 residues long: Large ribosomal subunit protein bL21 (104 aa).

It belongs to the bacterial ribosomal protein bL21 family. As to quaternary structure, part of the 50S ribosomal subunit. Contacts protein L20.

This protein binds to 23S rRNA in the presence of protein L20. The protein is Large ribosomal subunit protein bL21 of Nitrosococcus oceani (strain ATCC 19707 / BCRC 17464 / JCM 30415 / NCIMB 11848 / C-107).